The chain runs to 315 residues: Neuroguidin (315 aa).

Disordered stretches follow at residues 127–201 (SEND…KQKR) and 289–315 (VQDI…RKRK). Basic and acidic residues-rich tracts occupy residues 159–168 (KTKEQKEPSG) and 182–200 (YDGD…EKQK). Positions 181-206 (HYDGDLTEADRQKERVEKQKRAALRS) form a coiled coil. Over residues 296–315 (KPKKKKIIKKGKKKVFRKRK) the composition is skewed to basic residues.

It belongs to the SAS10 family. In terms of assembly, part of the small subunit (SSU) processome, composed of more than 70 proteins and the RNA chaperone small nucleolar RNA (snoRNA) U3.

The protein resides in the nucleus. The protein localises to the nucleolus. It localises to the chromosome. Its subcellular location is the centromere. It is found in the cytoplasm. The protein resides in the cell projection. The protein localises to the axon. It localises to the dendrite. Its subcellular location is the filopodium. Its function is as follows. Part of the small subunit (SSU) processome, first precursor of the small eukaryotic ribosomal subunit. During the assembly of the SSU processome in the nucleolus, many ribosome biogenesis factors, an RNA chaperone and ribosomal proteins associate with the nascent pre-rRNA and work in concert to generate RNA folding, modifications, rearrangements and cleavage as well as targeted degradation of pre-ribosomal RNA by the RNA exosome. Its dissociation from the complex determines the transition from state pre-A1 to state pre-A1*. May inhibit mRNA translation. The protein is Neuroguidin (ngdn) of Danio rerio (Zebrafish).